Here is a 1465-residue protein sequence, read N- to C-terminus: DNA polymerase III PolC-type (1465 aa).

The Exonuclease domain occupies 425–581; it reads YVVFDVETTG…YDAEATGRLL (157 aa).

The protein belongs to the DNA polymerase type-C family. PolC subfamily.

The protein resides in the cytoplasm. It carries out the reaction DNA(n) + a 2'-deoxyribonucleoside 5'-triphosphate = DNA(n+1) + diphosphate. Functionally, required for replicative DNA synthesis. This DNA polymerase also exhibits 3' to 5' exonuclease activity. The polypeptide is DNA polymerase III PolC-type (Streptococcus mutans serotype c (strain ATCC 700610 / UA159)).